The sequence spans 112 residues: UPF0060 membrane protein Mpe_A1656 (112 aa).

4 consecutive transmembrane segments (helical) span residues 9 to 29 (GLFF…WLVL), 34 to 54 (SAWL…LLTL), 65 to 85 (AYGG…DGVV), and 91 to 111 (LVGG…PRAA).

This sequence belongs to the UPF0060 family.

It is found in the cell inner membrane. The sequence is that of UPF0060 membrane protein Mpe_A1656 from Methylibium petroleiphilum (strain ATCC BAA-1232 / LMG 22953 / PM1).